A 311-amino-acid polypeptide reads, in one-letter code: Methionyl-tRNA formyltransferase (311 aa).

110 to 113 provides a ligand contact to (6S)-5,6,7,8-tetrahydrofolate; that stretch reads SLLP.

It belongs to the Fmt family.

The enzyme catalyses L-methionyl-tRNA(fMet) + (6R)-10-formyltetrahydrofolate = N-formyl-L-methionyl-tRNA(fMet) + (6S)-5,6,7,8-tetrahydrofolate + H(+). In terms of biological role, attaches a formyl group to the free amino group of methionyl-tRNA(fMet). The formyl group appears to play a dual role in the initiator identity of N-formylmethionyl-tRNA by promoting its recognition by IF2 and preventing the misappropriation of this tRNA by the elongation apparatus. This Streptococcus pneumoniae (strain P1031) protein is Methionyl-tRNA formyltransferase.